The chain runs to 497 residues: ADP-dependent glucokinase (497 aa).

The first 22 residues, 1 to 22, serve as a signal peptide directing secretion; sequence MALWRGSAYAGFLALAVGCVFL. One can recognise an ADPK domain in the interval 52 to 497; that stretch reads SPEGRLAAAW…LFYSEVHPHL (446 aa). Residues glutamate 297, glutamate 328, and aspartate 481 each contribute to the Mg(2+) site. Aspartate 481 (proton acceptor) is an active-site residue.

This sequence belongs to the ADP-dependent glucokinase family. As to quaternary structure, monomer. Mg(2+) serves as cofactor.

It is found in the secreted. The enzyme catalyses D-glucose + ADP = D-glucose 6-phosphate + AMP + H(+). It participates in carbohydrate degradation; glycolysis. Its function is as follows. Catalyzes the phosphorylation of D-glucose to D-glucose 6-phosphate using ADP as the phosphate donor. GDP and CDP can replace ADP, but with reduced efficiency. This is ADP-dependent glucokinase (ADPGK) from Bos taurus (Bovine).